Here is a 283-residue protein sequence, read N- to C-terminus: Small aggregate formation protein (283 aa).

The protein localises to the cytoplasm. In terms of biological role, knockout of the gene for this protein causes small aggregate formation. May regulate the secretion or processing of a secreted factor that regulates aggregate size. The polypeptide is Small aggregate formation protein (smlA) (Dictyostelium discoideum (Social amoeba)).